Here is a 161-residue protein sequence, read N- to C-terminus: MSKIKLISSDNEEFVVDQLIAERSMLIKNMLEDVGEINVPIPLPNVSSNVLRKVLEWCEHHKNDLYSGTEEESDIRLKKSTDIDEWDRKFMAVDQEMLFEIVLASNYLDIKPLLDTGCKTVANMIRGKSPEDIRKTFNIPNDFTPEEEEQIRKENEWAEDR.

Residues 102–161 (VLASNYLDIKPLLDTGCKTVANMIRGKSPEDIRKTFNIPNDFTPEEEEQIRKENEWAEDR) are interaction with the F-box domain of F-box proteins.

It belongs to the SKP1 family. Essential component of the E3 ubiquitin ligase Skp1-Cullin-1-F-box (SCF) complex. Interacts with cul1, fbh1, mcs2, pip1, pof1, pof2, pof3, pof4, pof5, pof6, pof7, pof8, pof9, pof10, pof11, pof12, pof13, pof14, pop1, pop2 and tfb3. Forms a complex with pof6 and sip1. Component of the RAVE complex composed of rav1, rav2 and skp1.

The protein resides in the cytoplasm. It is found in the nucleus. Its function is as follows. Required for cig2 degradation in the G2 and M phases of the cell cycle. Together with pof6, essential for septum processing and cell separation. Involved in mitotic progression, essential for the execution of anaphase B; required for coordinated structural alterations of mitotic spindles and segregation of nuclear membrane structures at anaphase. Involved in the DNA damage checkpoint pathway and maintenance of genome integrity. Component of the RAVE complex which is required for stable assembly of the vacuolar ATPase complex V-ATPase. This Schizosaccharomyces pombe (strain 972 / ATCC 24843) (Fission yeast) protein is Suppressor of kinetochore protein 1.